The chain runs to 336 residues: tRNA-modifying protein YgfZ (336 aa).

W28 and W191 together coordinate folate.

The protein belongs to the tRNA-modifying YgfZ family.

It localises to the cytoplasm. Its function is as follows. Folate-binding protein involved in regulating the level of ATP-DnaA and in the modification of some tRNAs. It is probably a key factor in regulatory networks that act via tRNA modification, such as initiation of chromosomal replication. The polypeptide is tRNA-modifying protein YgfZ (Hamiltonella defensa subsp. Acyrthosiphon pisum (strain 5AT)).